Reading from the N-terminus, the 227-residue chain is Ribonuclease 3 (227 aa).

Positions 3–130 constitute an RNase III domain; the sequence is TNAISKIIKY…LIGAIYLDGG (128 aa). Mg(2+) is bound at residue Glu43. Asp47 is a catalytic residue. Residues Asn116 and Glu119 each coordinate Mg(2+). Glu119 is a catalytic residue. In terms of domain architecture, DRBM spans 155–224; sequence DAKTILQEWA…ASLMLAKINY (70 aa).

Belongs to the ribonuclease III family. Homodimer. The cofactor is Mg(2+).

The protein localises to the cytoplasm. The catalysed reaction is Endonucleolytic cleavage to 5'-phosphomonoester.. Digests double-stranded RNA. Involved in the processing of primary rRNA transcript to yield the immediate precursors to the large and small rRNAs (23S and 16S). Processes some mRNAs, and tRNAs when they are encoded in the rRNA operon. Processes pre-crRNA and tracrRNA of type II CRISPR loci if present in the organism. The sequence is that of Ribonuclease 3 from Ehrlichia ruminantium (strain Gardel).